A 377-amino-acid chain; its full sequence is Flagellin D (377 aa).

A coiled-coil region spans residues 104–128 (NSKADRVAIQEEVTALNDELNRIAE).

It belongs to the bacterial flagellin family. As to quaternary structure, heteromer of multiple flagellin subunits including FlaA, FlaB, FlaC, FlaD and possibly FlaE.

Its subcellular location is the secreted. The protein localises to the bacterial flagellum. Flagellin is the subunit protein which polymerizes to form the filaments of bacterial flagella. FlaD is not essential for flagellar synthesis and motility. May have a role in virulence unrelated to motility. In Vibrio anguillarum (Listonella anguillarum), this protein is Flagellin D (flaD).